We begin with the raw amino-acid sequence, 253 residues long: MGELPGSEGMWENCPLGWVKKKASGTLAPLDFLLQRKRLWLWASEPVRPQPQGIHRFREARRQFCRMRGSRLTGGRKGFGSSGLRFGRGGFSEEVMPQPVLKAMRCAEGAWWFSPDGPAGSAASIWPAEGAEGLPGQLGRDRLEVVYSVPDNVPGQNGSRRPLVCKITGKCLSVCSEENAKAGGCSAFPLLLSQLGARMTGREHAHKGPELTTPDSGLPRPPNPALAGFRALAQHSPPLGTSTPSAVLLSAAT.

Basic and acidic residues predominate over residues 200-209 (TGREHAHKGP). Disordered stretches follow at residues 200–225 (TGREHAHKGPELTTPDSGLPRPPNPA) and 234–253 (QHSPPLGTSTPSAVLLSAAT).

Most abundantly expressed in gastrointestinal tissues. Expressed at lower levels in kidney and placenta. Expressed in fetal brain, liver, placenta, kidney and lung.

This is an uncharacterized protein from Homo sapiens (Human).